The primary structure comprises 65 residues: Large ribosomal subunit protein bL35 (65 aa).

Over residues 1-16 the composition is skewed to basic residues; that stretch reads MPKMKTKSSAKKRFKV. Residues 1 to 26 form a disordered region; that stretch reads MPKMKTKSSAKKRFKVRSSGGIKRSQ.

The protein belongs to the bacterial ribosomal protein bL35 family.

This is Large ribosomal subunit protein bL35 from Azoarcus sp. (strain BH72).